A 290-amino-acid chain; its full sequence is Release factor glutamine methyltransferase (290 aa).

Positions 140 and 181 each coordinate S-adenosyl-L-methionine. 181-184 (NPPY) is a binding site for substrate.

Belongs to the protein N5-glutamine methyltransferase family. PrmC subfamily.

The enzyme catalyses L-glutaminyl-[peptide chain release factor] + S-adenosyl-L-methionine = N(5)-methyl-L-glutaminyl-[peptide chain release factor] + S-adenosyl-L-homocysteine + H(+). Methylates the class 1 translation termination release factors RF1/PrfA and RF2/PrfB on the glutamine residue of the universally conserved GGQ motif. The sequence is that of Release factor glutamine methyltransferase from Chlamydia trachomatis serovar D (strain ATCC VR-885 / DSM 19411 / UW-3/Cx).